The primary structure comprises 600 residues: PWWP domain-containing protein 2B (600 aa).

Disordered regions lie at residues 81 to 115 (ETGP…PVPA), 143 to 171 (WVPQ…LILS), 186 to 350 (KSTV…LGDG), 366 to 408 (GCPR…PQGK), and 426 to 477 (DCTS…TVPP). Over residues 104–115 (EPPPPLIPPVPA) the composition is skewed to pro residues. The segment covering 151–160 (TIKRTRRRLS) has biased composition (basic residues). Residues 187–200 (STVSPQEASPSPLN) show a composition bias toward polar residues. Phosphoserine is present on residues serine 190 and serine 210. Over residues 239-252 (EKREEDRVAGERVP) the composition is skewed to basic and acidic residues. Phosphoserine is present on serine 254. The span at 286-297 (PQQSLQNGSQDS) shows a compositional bias: polar residues. A compositionally biased stretch (basic and acidic residues) spans 298-309 (EVSRDVEPRGGG). Over residues 328-339 (PVPPISDLPPPK) the composition is skewed to pro residues. The span at 381–395 (DGSSHGLEDLSSGSS) shows a compositional bias: low complexity. Polar residues predominate over residues 443–456 (SSGSEVTSPDTGDL). A Phosphoserine modification is found at serine 457. Positions 457-468 (SSGDSASVPSSS) are enriched in low complexity. In terms of domain architecture, PWWP spans 500 to 560 (VGDIVWGKIH…ISKLSPFSEF (61 aa)).

In terms of assembly, component of a MTA1-specific subcomplex of the NuRD complex composed of PWWP2B, MTA1 and HDAC1 but does not contain CHD4 and MBD3. Interacts with MTA1, MTA2, MTA3, HDAC1, HDAC2, RBBP4, RBBP7, BRCC3 and ZNF516. Does not interact with CHD4 and MBD3. Deubiquitinated by BRCC3; leading to its stabilization. In terms of tissue distribution, expressed in the brown adipose tissue.

It is found in the nucleus. Its function is as follows. Chromatin-binding protein that acts as an adapter between distinct nucleosome components (H3K36me3 or H2A.Z) and chromatin-modifying complexes, contributing to the regulation of the levels of histone acetylation at actively transcribed genes. Competes with CHD4 and MBD3 for interaction with MTA1 to form a NuRD subcomplex, preventing the formation of full NuRD complex (containing CHD4 and MBD3), leading to recruitment of HDACs to gene promoters resulting in turn in the deacetylation of nearby H3K27 and H2A.Z. Plays a role in facilitating transcriptional elongation through regulation of histone acetylation. Negatively regulates brown adipocyte thermogenesis by interacting with and stabilizing HDAC1 at the UCP1 gene promoter, thereby promoting histone deacetylation at the promoter leading to the repression of UCP1 expression. The sequence is that of PWWP domain-containing protein 2B (Pwwp2b) from Mus musculus (Mouse).